A 90-amino-acid chain; its full sequence is Signal recognition particle 19 kDa protein (90 aa).

Belongs to the SRP19 family. Part of the signal recognition particle protein translocation system, which is composed of SRP and FtsY. Archaeal SRP consists of a 7S RNA molecule of 300 nucleotides and two protein subunits: SRP54 and SRP19.

Its subcellular location is the cytoplasm. Involved in targeting and insertion of nascent membrane proteins into the cytoplasmic membrane. Binds directly to 7S RNA and mediates binding of the 54 kDa subunit of the SRP. The sequence is that of Signal recognition particle 19 kDa protein from Methanococcus aeolicus (strain ATCC BAA-1280 / DSM 17508 / OCM 812 / Nankai-3).